We begin with the raw amino-acid sequence, 175 residues long: MGALVIRGIRNFNLENRAEREISKMKPSVAPRHPSTNSLLREQISLYPEVKGEIARKDEKLLSFLKDVYVDSKDPVSSLQVKAAETCQEPKEFRLPKDHHFDMINIKSIPKGKISIVEALTLLNNHKLFPETWTAEKIMQEYQLEQKDVNSLLKYFVTFEVEIFPPEDKKAIRSK.

A lipid anchor (N-myristoyl glycine) is attached at glycine 2. Serine 35 carries the post-translational modification Phosphoserine.

It belongs to the NDUFAF4 family. In terms of assembly, binds calmodulin. Interacts with NDUFAF3. (Microbial infection) Interacts with the vesicular stomatitis virus matrix protein/M; the interaction inhibits viral propagation. Phosphorylated on serine. Prolactin stimulate serine phosphorylation.

The protein resides in the mitochondrion. It localises to the membrane. In terms of biological role, involved in the assembly of mitochondrial NADH:ubiquinone oxidoreductase complex (complex I). May be involved in cell proliferation and survival of hormone-dependent tumor cells. May be a regulator of breast tumor cell invasion. The sequence is that of NADH dehydrogenase [ubiquinone] 1 alpha subcomplex assembly factor 4 from Homo sapiens (Human).